The chain runs to 232 residues: Ubiquinone biosynthesis O-methyltransferase (232 aa).

The S-adenosyl-L-methionine site is built by Arg-36, Gly-55, Asp-76, and Leu-120.

The protein belongs to the methyltransferase superfamily. UbiG/COQ3 family.

It catalyses the reaction a 3-demethylubiquinol + S-adenosyl-L-methionine = a ubiquinol + S-adenosyl-L-homocysteine + H(+). It carries out the reaction a 3-(all-trans-polyprenyl)benzene-1,2-diol + S-adenosyl-L-methionine = a 2-methoxy-6-(all-trans-polyprenyl)phenol + S-adenosyl-L-homocysteine + H(+). Its pathway is cofactor biosynthesis; ubiquinone biosynthesis. O-methyltransferase that catalyzes the 2 O-methylation steps in the ubiquinone biosynthetic pathway. The polypeptide is Ubiquinone biosynthesis O-methyltransferase (Pseudomonas putida (strain GB-1)).